The sequence spans 66 residues: Large ribosomal subunit protein bL35 (66 aa).

Belongs to the bacterial ribosomal protein bL35 family.

The protein is Large ribosomal subunit protein bL35 of Moorella thermoacetica (strain ATCC 39073 / JCM 9320).